The primary structure comprises 424 residues: MAKNIQAIRGMNDYLPADTALWQPIEAALKQVLASYGYSEIRLPIVEQTPLFKRAIGEVTDVVEKEMYTFEDRNGDSLTLRPEGTAGCVRAGIEHGLLYNQEQRLWYIGPMFRHERPQKGRYRQFHQLGAEVFGLAGPDIDAEIIMMTARWWKVLGIADHVTLELNSIGSLEARAAYRDALVAYLEQYKDQLDEDCLRRMYSNPLRVLDSKNPQVQALLNAAPRLSEYLDADSRAHFDGLCRLLDDAGIVYTVNERLVRGLDYYNRTVFEWVTTSLGAQGTVCAGGRYDGLVAQLGGHATSAVGFAMGLERLVLLVQAVNPAFLPQRAVDVYLIAAGEGTQSAAMRLAEQLRDALPTLRLMTNYGGGNFKKQFARADKWGARIALVLGESEVQSGQVNVKCLASGEQQTVAQDQAATLLATLLG.

Belongs to the class-II aminoacyl-tRNA synthetase family. As to quaternary structure, homodimer.

The protein resides in the cytoplasm. It catalyses the reaction tRNA(His) + L-histidine + ATP = L-histidyl-tRNA(His) + AMP + diphosphate + H(+). This Edwardsiella ictaluri (strain 93-146) protein is Histidine--tRNA ligase.